Consider the following 323-residue polypeptide: Quinolinate synthase (323 aa).

Residues His38 and Ser55 each contribute to the iminosuccinate site. Residue Cys100 participates in [4Fe-4S] cluster binding. Iminosuccinate-binding positions include 126 to 128 and Ser143; that span reads YIN. Cys186 is a binding site for [4Fe-4S] cluster. Iminosuccinate-binding positions include 212–214 and Thr229; that span reads HPE. Residue Cys279 participates in [4Fe-4S] cluster binding.

It belongs to the quinolinate synthase family. Type 2 subfamily. Requires [4Fe-4S] cluster as cofactor.

It is found in the cytoplasm. The catalysed reaction is iminosuccinate + dihydroxyacetone phosphate = quinolinate + phosphate + 2 H2O + H(+). It functions in the pathway cofactor biosynthesis; NAD(+) biosynthesis; quinolinate from iminoaspartate: step 1/1. Catalyzes the condensation of iminoaspartate with dihydroxyacetone phosphate to form quinolinate. The polypeptide is Quinolinate synthase (Gloeothece citriformis (strain PCC 7424) (Cyanothece sp. (strain PCC 7424))).